The following is a 157-amino-acid chain: Peptide methionine sulfoxide reductase MsrA (157 aa).

Residue C10 is part of the active site.

It belongs to the MsrA Met sulfoxide reductase family.

It catalyses the reaction L-methionyl-[protein] + [thioredoxin]-disulfide + H2O = L-methionyl-(S)-S-oxide-[protein] + [thioredoxin]-dithiol. The catalysed reaction is [thioredoxin]-disulfide + L-methionine + H2O = L-methionine (S)-S-oxide + [thioredoxin]-dithiol. Functionally, has an important function as a repair enzyme for proteins that have been inactivated by oxidation. Catalyzes the reversible oxidation-reduction of methionine sulfoxide in proteins to methionine. In Clostridium botulinum (strain Hall / ATCC 3502 / NCTC 13319 / Type A), this protein is Peptide methionine sulfoxide reductase MsrA.